Consider the following 453-residue polypeptide: Wall-associated protein (453 aa).

An N-terminal signal peptide occupies residues 1-29 (MKMKRKLLSLVSVLTILLGAFWVTKIVKA). The interval 331–403 (GRASSRVKRQ…TASQTNVPTT (73 aa)) is disordered. A compositionally biased stretch (low complexity) spans 342-403 (ETTTVTETTT…TASQTNVPTT (62 aa)). Residues 422–426 (LPSTG) carry the LPXTG sorting signal motif. At T425 the chain carries Pentaglycyl murein peptidoglycan amidated threonine. The propeptide at 426-453 (GEQAGLLLTTVGLVIVAVAGVYFYRTRR) is removed by sortase.

Its subcellular location is the secreted. The protein localises to the cell wall. The protein is Wall-associated protein (wapA) of Streptococcus mutans serotype c (strain ATCC 700610 / UA159).